A 63-amino-acid polypeptide reads, in one-letter code: Synergistic-type venom protein C9S3, chain 1 (63 aa).

Cystine bridges form between C3-C24, C17-C42, and C46-C57.

This sequence belongs to the three-finger toxin family. Short-chain subfamily. Aminergic toxin sub-subfamily. In terms of assembly, heterodimer of C9S3 chain 1 and chain 2 (AC P01409); disulfide-linked. Expressed by the venom gland.

The protein resides in the secreted. In terms of biological role, this protein shows a synergetic toxic effect in that it enhances the toxicity of other toxins. This Dendroaspis angusticeps (Eastern green mamba) protein is Synergistic-type venom protein C9S3, chain 1.